Here is a 507-residue protein sequence, read N- to C-terminus: MGEFQRNENKHKSWQQFFLYPLFFREDLYAIAHDHHLDRSGSSEPTEILVSNFLSFLTVKRSIRRMRKQTNSISLFGNSDPNKLIECNKNFYSKSILEGFTIVLEVSFAMRSKHFIEGMNGWNSLRSIHCLFPLMEDKLPHSNYISDIRVPYSIHPEILVRIFRRWIRDAPSLHLLRSILHEWKNSFSRENLQKALITQIENTRFSLFLWNSYVYECESFLIPLIKRFFNSQSLLYGSFPDRTHFDKKIKDIVLFPRKISTKKIWLLKDSFIHYVRYGERSLMALKGTHLQVKKCRYHLFHFWQYYFHLWFQPYRICSLQLSKTSFSFLGYFLHVKMKPLVVRVKMLDDLFITDLITNELNPIAPIRAILFFLAKEKFCDISGWPISKLSWTSLSDDDILDRFDRIWINLFHYYSGSINQEGLYHIKYILLLSCAKTLACKHKSTIRVVREQLGSELFTKSFSKEKFISSSFSKTRSQRERIWNSEISQINPLANFWQKMQNKQIEN.

The protein belongs to the intron maturase 2 family. MatK subfamily.

It is found in the plastid. Its subcellular location is the chloroplast. Its function is as follows. Usually encoded in the trnK tRNA gene intron. Probably assists in splicing its own and other chloroplast group II introns. The polypeptide is Maturase K (Cryptomeria japonica (Japanese cedar)).